Consider the following 67-residue polypeptide: Small ribosomal subunit protein eS17 (67 aa).

It belongs to the eukaryotic ribosomal protein eS17 family.

This Haloquadratum walsbyi (strain DSM 16790 / HBSQ001) protein is Small ribosomal subunit protein eS17.